Consider the following 594-residue polypeptide: ATP-dependent lipid A-core flippase (594 aa).

6 helical membrane passes run 35–55 (FVLA…IPKV), 64–84 (FGGS…GVAL), 135–155 (AVIF…ITLV), 161–181 (VVAL…VVAV), 262–282 (VTAF…MIQA), and 289–309 (IGGF…LKHL). Residues 36–318 (VLAIIAMGLV…LADLNQPLQR (283 aa)) enclose the ABC transmembrane type-1 domain. Positions 350-588 (LVFDNVGFRY…NGLYAGLHRI (239 aa)) constitute an ABC transporter domain. Residue 384–391 (GPSGSGKT) coordinates ATP.

This sequence belongs to the ABC transporter superfamily. Lipid exporter (TC 3.A.1.106) family. Homodimer.

The protein localises to the cell inner membrane. It carries out the reaction ATP + H2O + lipid A-core oligosaccharideSide 1 = ADP + phosphate + lipid A-core oligosaccharideSide 2.. Functionally, involved in lipopolysaccharide (LPS) biosynthesis. Translocates lipid A-core from the inner to the outer leaflet of the inner membrane. Transmembrane domains (TMD) form a pore in the inner membrane and the ATP-binding domain (NBD) is responsible for energy generation. The chain is ATP-dependent lipid A-core flippase from Cupriavidus metallidurans (strain ATCC 43123 / DSM 2839 / NBRC 102507 / CH34) (Ralstonia metallidurans).